The following is a 267-amino-acid chain: Dihydropteroate synthase (267 aa).

Residues 1-251 (MTKTKIMGIL…NVELNAKLAK (251 aa)) form the Pterin-binding domain. Residue Asn-11 coordinates Mg(2+). (7,8-dihydropterin-6-yl)methyl diphosphate is bound by residues Thr-51, Asp-84, Asn-103, Asp-167, Lys-203, and 239–241 (RVH).

The protein belongs to the DHPS family. In terms of assembly, homodimer. Mg(2+) is required as a cofactor.

The enzyme catalyses (7,8-dihydropterin-6-yl)methyl diphosphate + 4-aminobenzoate = 7,8-dihydropteroate + diphosphate. Its pathway is cofactor biosynthesis; tetrahydrofolate biosynthesis; 7,8-dihydrofolate from 2-amino-4-hydroxy-6-hydroxymethyl-7,8-dihydropteridine diphosphate and 4-aminobenzoate: step 1/2. In terms of biological role, catalyzes the condensation of para-aminobenzoate (pABA) with 6-hydroxymethyl-7,8-dihydropterin diphosphate (DHPt-PP) to form 7,8-dihydropteroate (H2Pte), the immediate precursor of folate derivatives. This chain is Dihydropteroate synthase (folP), found in Staphylococcus aureus (strain MW2).